The following is a 62-amino-acid chain: Photosystem II reaction center protein Z (62 aa).

2 consecutive transmembrane segments (helical) span residues 8–28 and 41–61; these read TVLALIATSFLMVIGVPVIFA and FSGALLWISLVFAVGILNSFV.

This sequence belongs to the PsbZ family. PSII is composed of 1 copy each of membrane proteins PsbA, PsbB, PsbC, PsbD, PsbE, PsbF, PsbH, PsbI, PsbJ, PsbK, PsbL, PsbM, PsbT, PsbY, PsbZ, Psb30/Ycf12, at least 3 peripheral proteins of the oxygen-evolving complex and a large number of cofactors. It forms dimeric complexes.

The protein resides in the plastid. It localises to the chloroplast thylakoid membrane. Functionally, may control the interaction of photosystem II (PSII) cores with the light-harvesting antenna, regulates electron flow through the 2 photosystem reaction centers. PSII is a light-driven water plastoquinone oxidoreductase, using light energy to abstract electrons from H(2)O, generating a proton gradient subsequently used for ATP formation. This chain is Photosystem II reaction center protein Z, found in Mesostigma viride (Green alga).